We begin with the raw amino-acid sequence, 700 residues long: Hedgehog-interacting protein (700 aa).

An N-terminal signal peptide occupies residues 1 to 17; it reads MLKMLSFKLLLLAVALG. Asparagine 99 carries an N-linked (GlcNAc...) asparagine glycan. Intrachain disulfides connect cysteine 216/cysteine 536, cysteine 218/cysteine 543, cysteine 402/cysteine 624, cysteine 435/cysteine 452, cysteine 500/cysteine 594, cysteine 608/cysteine 617, cysteine 612/cysteine 623, cysteine 625/cysteine 634, cysteine 639/cysteine 649, cysteine 643/cysteine 655, and cysteine 657/cysteine 666. The tract at residues 376 to 388 is interaction with SHH zinc binding site; that stretch reads LDDMEEMDGLSDF. Aspartate 383 contacts Zn(2+). Asparagine 416, asparagine 447, and asparagine 459 each carry an N-linked (GlcNAc...) asparagine glycan. EGF-like domains are found at residues 607–634 and 635–667; these read ECSR…GDFC and RTAK…PQCE.

It belongs to the HHIP family. Interacts with all three hedgehog family members, SHH, IHH and DHH. Widely expressed in fetal and adult tissues. Highest expression in adult heart, liver and pancreas, and in fetal kidney.

It is found in the cell membrane. Its subcellular location is the secreted. It localises to the cytoplasm. Its function is as follows. Modulates hedgehog signaling in several cell types including brain and lung through direct interaction with members of the hedgehog family. The polypeptide is Hedgehog-interacting protein (HHIP) (Homo sapiens (Human)).